The chain runs to 581 residues: AP2-like ethylene-responsive transcription factor AIL6 (581 aa).

Disordered stretches follow at residues 105 to 132 (VRYS…HHNQ) and 205 to 240 (NNTN…TDSE). Low complexity-rich tracts occupy residues 108 to 122 (SDNS…SLTQ) and 218 to 232 (RGNN…NNNN). 2 consecutive DNA-binding regions (AP2/ERF) follow at residues 268-331 (IYRG…TNFP) and 367-425 (IYRG…TNFE).

Belongs to the AP2/ERF transcription factor family. AP2 subfamily. In terms of tissue distribution, expressed in roots, seedlings, hypocotyl, inflorescence, siliques, and pistils. Also detected at low levels in leaves.

The protein resides in the nucleus. Its function is as follows. Probably acts as a transcriptional activator. Binds to the GCC-box pathogenesis-related promoter element. May be involved in the regulation of gene expression by stress factors and by components of stress signal transduction pathways. In Arabidopsis thaliana (Mouse-ear cress), this protein is AP2-like ethylene-responsive transcription factor AIL6.